Reading from the N-terminus, the 127-residue chain is UPF0325 protein VS_2356 (127 aa).

The protein belongs to the UPF0325 family.

The polypeptide is UPF0325 protein VS_2356 (Vibrio atlanticus (strain LGP32) (Vibrio splendidus (strain Mel32))).